The following is a 447-amino-acid chain: Phosphoglucosamine mutase (447 aa).

S105 functions as the Phosphoserine intermediate in the catalytic mechanism. Mg(2+) is bound by residues S105, D244, D246, and D248. S105 is subject to Phosphoserine.

The protein belongs to the phosphohexose mutase family. Requires Mg(2+) as cofactor. Activated by phosphorylation.

The enzyme catalyses alpha-D-glucosamine 1-phosphate = D-glucosamine 6-phosphate. Its function is as follows. Catalyzes the conversion of glucosamine-6-phosphate to glucosamine-1-phosphate. This is Phosphoglucosamine mutase from Polynucleobacter asymbioticus (strain DSM 18221 / CIP 109841 / QLW-P1DMWA-1) (Polynucleobacter necessarius subsp. asymbioticus).